Consider the following 1039-residue polypeptide: Protein male-specific lethal-1 (1039 aa).

Positions Met1–Ala13 are enriched in basic residues. Disordered stretches follow at residues Met1 to Gln44 and Arg171 to Ile199. Position 18 is a phosphoserine (Ser18). Ser238 is modified (phosphoserine). 4 disordered regions span residues His244 to Asn266, Gly358 to Asn454, Lys485 to Val691, and Ile729 to Thr799. The span at Lys255–Asn266 shows a compositional bias: basic and acidic residues. A compositionally biased stretch (acidic residues) spans Glu368 to Tyr392. The span at Ser397–Glu407 shows a compositional bias: basic and acidic residues. Over residues Ala431–Ala445 the composition is skewed to polar residues. Ser433 carries the phosphoserine modification. Thr434 carries the phosphothreonine modification. Phosphoserine occurs at positions 492 and 496. Basic and acidic residues-rich tracts occupy residues Pro504–Ala515 and Pro523–Lys570. Composition is skewed to polar residues over residues Thr581–Lys592 and Asn609–Leu625. Residue Ser585 is modified to Phosphoserine. Thr659 is subject to Phosphothreonine. 2 positions are modified to phosphoserine: Ser682 and Ser684. Position 747 is a phosphothreonine (Thr747). Residue Ser749 is modified to Phosphoserine. Phosphothreonine occurs at positions 750, 751, and 753. Over residues Gln759–Gln768 the composition is skewed to polar residues. 2 positions are modified to phosphoserine: Ser764 and Ser765. Position 788 is a phosphothreonine (Thr788). The residue at position 810 (Ser810) is a Phosphoserine. Residues Thr813 and Thr832 each carry the phosphothreonine modification. A PEHE domain is found at Ser865–Trp983. Phosphoserine occurs at positions 879 and 889. The interaction with mof HAT domain stretch occupies residues Glu886 to Glu904. A disordered region spans residues Ile1011 to Arg1039. Thr1014 bears the Phosphothreonine mark. The residue at position 1025 (Ser1025) is a Phosphoserine. Positions Pro1030–Arg1039 are enriched in basic residues. The Nuclear localization signal signature appears at Arg1032–Lys1037.

Belongs to the msl-1 family. As to quaternary structure, component of the male-specific lethal (MSL) histone acetyltransferase complex, composed of mof, mle, msl-1, msl-2 and msl-3 proteins, as well as roX1 and roX2 non-coding RNAs. Interacts (via PEHE domain) with mof (via HAT domain) and msl-3 (via MRG domain); both interactions are direct. Interacts with tamo via the nuclear localization signal. Component of a maternal MSL subcomplex composed of mof, msl-1 and msl-3. Post-translationally, phosphorylation at Ser-18, Thr743, Thr-747 and Thr-751 is required to promote phosphorylation of 'Ser-5' of the C-terminal heptapeptide repeat domain (CTD) of the largest RNA polymerase II subunit Polr2A. Phosphorylated by Cdk7 in vitro. In contrast, phosphorylation at Ser-18, Thr743, Thr-747 and Thr-751 does not affect its role in dosage compensation in males. In terms of processing, ubiquitinated by msl-2.

The protein resides in the nucleus. The protein localises to the chromosome. Component of the male-specific lethal (MSL) histone acetyltransferase complex, a multiprotein complex essential for elevating transcription of the single X chromosome in the male (X chromosome dosage compensation). The MSL complex specifically associates with the single X chromosome in males and mediates formation of H4K16ac, promoting a two-fold activation of X chromosome. In complex with msl-2, promotes ubiquitination of histone H2B. In addition to its role in dosage compensation in males, regulates the activity of gene promoters: acts together with Cdk7 to promote phosphorylation of 'Ser-5' of the C-terminal heptapeptide repeat domain (CTD) of the largest RNA polymerase II subunit Polr2A. This is Protein male-specific lethal-1 from Drosophila melanogaster (Fruit fly).